Consider the following 188-residue polypeptide: dCTP deaminase (188 aa).

Lysine 109–arginine 114 is a dCTP binding site. The Proton donor/acceptor role is filled by glutamate 135. Positions 154, 168, and 178 each coordinate dCTP.

The protein belongs to the dCTP deaminase family. As to quaternary structure, homotrimer.

The enzyme catalyses dCTP + H2O + H(+) = dUTP + NH4(+). It participates in pyrimidine metabolism; dUMP biosynthesis; dUMP from dCTP (dUTP route): step 1/2. Its function is as follows. Catalyzes the deamination of dCTP to dUTP. This chain is dCTP deaminase, found in Helicobacter pylori (strain P12).